A 61-amino-acid polypeptide reads, in one-letter code: Chromatin protein Cren7 (61 aa).

Belongs to the Cren7 family. In terms of assembly, monomer. In terms of processing, methylated at multiple sites, to varying extents.

The protein resides in the chromosome. The protein localises to the cytoplasm. A chromatin protein, binds double-stranded DNA without sequence specificity. Constrains negative DNA supercoils. The protein is Chromatin protein Cren7 of Caldivirga maquilingensis (strain ATCC 700844 / DSM 13496 / JCM 10307 / IC-167).